A 742-amino-acid chain; its full sequence is 2'-5'-oligoadenylate synthase 2 (742 aa).

The interval 1-35 is disordered; the sequence is MGNWLTGNWSSDRSSGYSSGWSPGGSSGVPSGPVH. A lipid anchor (N-myristoyl glycine) is attached at Gly-2. Residues 10-21 show a composition bias toward low complexity; that stretch reads SSDRSSGYSSGW. 2 OAS domain regions span residues 60–374 and 382–721; these read VPSQ…YWDV and TPSH…WKVP. An N6-acetyllysine modification is found at Lys-417. Ser-436 serves as a coordination point for ATP. Mg(2+)-binding residues include Asp-448, Asp-450, and Asp-519. 2 residues coordinate ATP: Arg-582 and Lys-585.

Belongs to the 2-5A synthase family. Homodimer. Mg(2+) serves as cofactor. Myristoylation is not essential for its activity. In terms of processing, glycosylated. Glycosylation is essential for its activity. As to expression, expressed in the uterus. Expressed in mammary glands: expressed at low level before the establishment of lactation, then expression strongly increases, and subsequently decreases during early involution.

It is found in the cytoplasm. Its subcellular location is the perinuclear region. It carries out the reaction 3 ATP = 5'-triphosphoadenylyl-(2'-&gt;5')-adenylyl-(2'-&gt;5')-adenosine + 2 diphosphate. With respect to regulation, produced as a latent enzyme which is activated by double stranded RNA (dsRNA) generated during the course of viral infection. The dsRNA activator must be at least 15 nucleotides long, and no modification of the 2'-hydroxyl group is tolerated. ssRNA or dsDNA do not act as activators. Strongly inhibited by copper, iron and zinc ions. Partially inhibited by cobalt and nickel ions. Functionally, interferon-induced, dsRNA-activated antiviral enzyme which plays a critical role in cellular innate antiviral response. Activated by detection of double stranded RNA (dsRNA): polymerizes higher oligomers of 2'-5'-oligoadenylates (2-5A) from ATP which then bind to the inactive monomeric form of ribonuclease L (RNASEL) leading to its dimerization and subsequent activation. Activation of RNASEL leads to degradation of cellular as well as viral RNA, resulting in the inhibition of protein synthesis, thus terminating viral replication. Can mediate the antiviral effect via the classical RNASEL-dependent pathway or an alternative antiviral pathway independent of RNASEL. In addition, it may also play a role in other cellular processes such as apoptosis, cell growth, differentiation and gene regulation. May act as a negative regulator of lactation, stopping lactation in virally infected mammary gland lobules, thereby preventing transmission of viruses to neonates. Non-infected lobules would not be affected, allowing efficient pup feeding during infection. This chain is 2'-5'-oligoadenylate synthase 2, found in Mus musculus (Mouse).